We begin with the raw amino-acid sequence, 88 residues long: Acylphosphatase (88 aa).

The 86-residue stretch at 3–88 folds into the Acylphosphatase-like domain; the sequence is RLVALVKGRV…EAGLKGFHVY (86 aa). Residues R18 and N36 contribute to the active site.

The protein belongs to the acylphosphatase family.

The enzyme catalyses an acyl phosphate + H2O = a carboxylate + phosphate + H(+). The sequence is that of Acylphosphatase (acyP) from Thermus thermophilus (strain ATCC BAA-163 / DSM 7039 / HB27).